The following is a 582-amino-acid chain: uncharacterized protein (582 aa).

The next 6 helical transmembrane spans lie at 17-37 (VAMLMMLQLVSTLASLYLPTV), 57-77 (LGAVMLGVTGLQVLCAIGAVY), 131-151 (MTATVLVTAPIMCVGGIIMAI), 156-176 (ALTWLLLVSVPILAVANYWII), 239-259 (ALMLPVTTLTINASSVALIWF), and 271-291 (VGSLIAFLSYFAQILMAVLMA). An ABC transmembrane type-1 domain is found at 17–300 (VAMLMMLQLV…ATMTLAVLPR (284 aa)). The ABC transporter domain occupies 335–571 (VRLAGATFTY…CPTYAEFAAS (237 aa)). 369–376 (GSTGSGKS) lines the ATP pocket.

It belongs to the ABC transporter superfamily. MsbA family.

Its subcellular location is the cell membrane. This is an uncharacterized protein from Mycobacterium bovis (strain ATCC BAA-935 / AF2122/97).